A 216-amino-acid polypeptide reads, in one-letter code: Probable nicotinate-nucleotide adenylyltransferase (216 aa).

The protein belongs to the NadD family.

The enzyme catalyses nicotinate beta-D-ribonucleotide + ATP + H(+) = deamido-NAD(+) + diphosphate. Its pathway is cofactor biosynthesis; NAD(+) biosynthesis; deamido-NAD(+) from nicotinate D-ribonucleotide: step 1/1. In terms of biological role, catalyzes the reversible adenylation of nicotinate mononucleotide (NaMN) to nicotinic acid adenine dinucleotide (NaAD). This is Probable nicotinate-nucleotide adenylyltransferase from Desulfatibacillum aliphaticivorans.